The primary structure comprises 259 residues: MARYDRAITVFSPDGHLFQVEYAMEAVRKGNAAVGVRGTDTVVLGVEKKSTPKLQDSRSVRKIVNLDDHIALACAGLKADARVLVNKARIECQSHRLTVEDPVTVEYITRYIAGLQQKYTQSGGVRPFGLSTLIIGFDPHTGVPSLYQTDPSGTFSAWKANATGRNSNSTREFLEKNYKETSGQETVKLAIRALLEVVESGGKNIEVAVMTKEHGLKQLEEAEIDAIVAEIEAEKAAAEAAKRPHRRNLVELKFVLNYP.

The protein belongs to the peptidase T1A family. As to quaternary structure, the 26S proteasome consists of a 20S proteasome core and two 19S regulatory subunits. The 20S proteasome core is composed of 28 subunits that are arranged in four stacked rings, resulting in a barrel-shaped structure. The two end rings are each formed by seven alpha subunits, and the two central rings are each formed by seven beta subunits. The catalytic chamber with the active sites is on the inside of the barrel.

The protein localises to the cytoplasm. Its subcellular location is the nucleus. In terms of biological role, the proteasome is a multicatalytic proteinase complex which is characterized by its ability to cleave peptides with Arg, Phe, Tyr, Leu, and Glu adjacent to the leaving group at neutral or slightly basic pH. The proteasome has an ATP-dependent proteolytic activity. This is Proteasome subunit alpha type-7 (PAD1) from Solanum lycopersicum (Tomato).